A 203-amino-acid polypeptide reads, in one-letter code: Outer-membrane lipoprotein carrier protein (203 aa).

Positions 1–21 are cleaved as a signal peptide; the sequence is MKKMAIACALLSSVVASSVWA. Positions 178-203 are disordered; it reads QQNGAVDPSKFTFTPPQGVTIDDQRK.

Belongs to the LolA family. Monomer.

The protein localises to the periplasm. In terms of biological role, participates in the translocation of lipoproteins from the inner membrane to the outer membrane. Only forms a complex with a lipoprotein if the residue after the N-terminal Cys is not an aspartate (The Asp acts as a targeting signal to indicate that the lipoprotein should stay in the inner membrane). This chain is Outer-membrane lipoprotein carrier protein, found in Salmonella agona (strain SL483).